The primary structure comprises 890 residues: Putative RNA-binding protein 15B (890 aa).

The disordered stretch occupies residues Met1–Ala133. The segment covering Ser10–Ala20 has biased composition (low complexity). Basic and acidic residues-rich tracts occupy residues Arg22 to Gly34 and Gly66 to His78. The span at Ser86–Ala99 shows a compositional bias: gly residues. 2 positions are modified to phosphoserine: Ser109 and Ser113. The segment covering Ser113–Ala124 has biased composition (pro residues). In terms of domain architecture, RRM 1 spans Lys139–Leu219. Lys213 participates in a covalent cross-link: Glycyl lysine isopeptide (Lys-Gly) (interchain with G-Cter in SUMO2). Residues Leu219–Leu253 form a disordered region. The segment covering Ser226–Ser237 has biased composition (low complexity). The segment covering Thr238 to Ala247 has biased composition (pro residues). Phosphoserine is present on residues Ser265 and Ser267. RRM domains are found at residues Arg337–Ala414 and Thr418–Ala492. Position 532 is a phosphothreonine (Thr532). Residues Glu547–Thr705 are disordered. Residues Ser552, Ser556, and Ser562 each carry the phosphoserine modification. Composition is skewed to basic and acidic residues over residues Arg573–Arg616 and Arg626–Lys646. Residues Arg593–Arg597 carry the Nuclear localization signal motif. Positions Glu647–Arg657 are enriched in low complexity. A compositionally biased stretch (basic and acidic residues) spans Glu671–His703. Lys702 is covalently cross-linked (Glycyl lysine isopeptide (Lys-Gly) (interchain with G-Cter in SUMO2)). The SPOC domain maps to Leu711–Thr889. An interaction with Epstein-Barr virus BMLF1 region spans residues Trp722–Ala890.

It belongs to the RRM Spen family. As to quaternary structure, component of the WMM complex, a N6-methyltransferase complex composed of a catalytic subcomplex, named MAC, and of an associated subcomplex, named MACOM. The MAC subcomplex is composed of METTL3 and METTL14. The MACOM subcomplex is composed of WTAP, ZC3H13, CBLL1/HAKAI, VIRMA, and, in some cases of RBM15 (RBM15 or RBM15B). May interact with NCOR2. Interacts with NXF1, the interaction is required to promote mRNA export. (Microbial infection) Interacts (via the SPOC domain) with Epstein-Barr virus BMLF1 (via the N-terminus); the interaction is direct. As to expression, ubiquitously expressed.

It is found in the nucleus. The protein resides in the nucleoplasm. The protein localises to the nucleus speckle. It localises to the nucleus envelope. In terms of biological role, RNA-binding protein that acts as a key regulator of N6-methyladenosine (m6A) methylation of RNAs, thereby regulating different processes, such as alternative splicing of mRNAs and X chromosome inactivation mediated by Xist RNA. Associated component of the WMM complex, a complex that mediates N6-methyladenosine (m6A) methylation of RNAs, a modification that plays a role in the efficiency of mRNA splicing and RNA processing. Plays a key role in m6A methylation, possibly by binding target RNAs and recruiting the WMM complex. Involved in random X inactivation mediated by Xist RNA: acts by binding Xist RNA and recruiting the WMM complex, which mediates m6A methylation, leading to target YTHDC1 reader on Xist RNA and promoting transcription repression activity of Xist. Functions in the regulation of alternative or illicit splicing, possibly by regulating m6A methylation. Inhibits pre-mRNA splicing. Also functions as a mRNA export factor by acting as a cofactor for the nuclear export receptor NXF1. In Homo sapiens (Human), this protein is Putative RNA-binding protein 15B.